The primary structure comprises 403 residues: RNA-binding motif, single-stranded-interacting protein 1 (403 aa).

Positions 30 to 56 (PAHPMAPPSPSTTSSNNNSSSSSNSGW) are disordered. Over residues 40–54 (STTSSNNNSSSSSNS) the composition is skewed to low complexity. 2 RRM domains span residues 62 to 135 (TNLY…MAKQ) and 141 to 226 (TNLY…FADG). At threonine 208 the chain carries Phosphothreonine. The segment covering 382–395 (GQQQVAVETSNDHS) has biased composition (polar residues). The tract at residues 382–403 (GQQQVAVETSNDHSPYTFPPNK) is disordered.

Ubiquitous. Expressed in all tissues except testis.

It localises to the nucleus. Single-stranded DNA binding protein that interacts with the region upstream of the MYC gene. Binds specifically to the DNA sequence motif 5'-[AT]CT[AT][AT]T-3'. Probably has a role in DNA replication. This chain is RNA-binding motif, single-stranded-interacting protein 1 (Rbms1), found in Mus musculus (Mouse).